Reading from the N-terminus, the 127-residue chain is Fluoride-specific ion channel FluC (127 aa).

4 helical membrane passes run 4 to 24, 38 to 58, 71 to 91, and 104 to 124; these read LSVLGFIALGGAFGACSRYLI, YGTLTVNVVGSFIMGLLIAAF, IIGLGFLGALTTFSTFSMDNV, and LNVLLNVVLSISAAWIGFQLL. Na(+) contacts are provided by glycine 78 and threonine 81.

It belongs to the fluoride channel Fluc/FEX (TC 1.A.43) family.

It localises to the cell inner membrane. It catalyses the reaction fluoride(in) = fluoride(out). Its activity is regulated as follows. Na(+) is not transported, but it plays an essential structural role and its presence is essential for fluoride channel function. Fluoride-specific ion channel. Important for reducing fluoride concentration in the cell, thus reducing its toxicity. The polypeptide is Fluoride-specific ion channel FluC (Vibrio campbellii (strain ATCC BAA-1116)).